The following is a 265-amino-acid chain: Tryptophan synthase alpha chain (265 aa).

Residues Glu-47 and Asp-58 each act as proton acceptor in the active site.

The protein belongs to the TrpA family. Tetramer of two alpha and two beta chains.

The enzyme catalyses (1S,2R)-1-C-(indol-3-yl)glycerol 3-phosphate + L-serine = D-glyceraldehyde 3-phosphate + L-tryptophan + H2O. It participates in amino-acid biosynthesis; L-tryptophan biosynthesis; L-tryptophan from chorismate: step 5/5. The alpha subunit is responsible for the aldol cleavage of indoleglycerol phosphate to indole and glyceraldehyde 3-phosphate. In Methanoregula boonei (strain DSM 21154 / JCM 14090 / 6A8), this protein is Tryptophan synthase alpha chain.